The chain runs to 234 residues: Ribonuclease 3 (234 aa).

The region spanning 13-136 (YITLEKALGY…LMAGVYLEAG (124 aa)) is the RNase III domain. Glu-49 is a binding site for Mg(2+). Asp-53 is a catalytic residue. The Mg(2+) site is built by Ser-122 and Glu-125. Glu-125 is an active-site residue. Residues 163-232 (DYKTALQELT…AYQALQKLKG (70 aa)) form the DRBM domain.

It belongs to the ribonuclease III family. Homodimer. Requires Mg(2+) as cofactor.

Its subcellular location is the cytoplasm. The enzyme catalyses Endonucleolytic cleavage to 5'-phosphomonoester.. In terms of biological role, digests double-stranded RNA. Involved in the processing of primary rRNA transcript to yield the immediate precursors to the large and small rRNAs (23S and 16S). Processes some mRNAs, and tRNAs when they are encoded in the rRNA operon. Processes pre-crRNA and tracrRNA of type II CRISPR loci if present in the organism. The chain is Ribonuclease 3 from Helicobacter acinonychis (strain Sheeba).